Reading from the N-terminus, the 760-residue chain is Mitochondrial intermediate peptidase (760 aa).

The N-terminal 19 residues, 1–19, are a transit peptide targeting the mitochondrion; the sequence is MLARSVRTLVVSPKTVFRF. Zn(2+) is bound at residue His-543. Residue Glu-544 is part of the active site. His-547 is a binding site for Zn(2+).

It belongs to the peptidase M3 family. It depends on Zn(2+) as a cofactor.

The protein resides in the mitochondrion matrix. It carries out the reaction Release of an N-terminal octapeptide as second stage of processing of some proteins imported into the mitochondrion.. In terms of biological role, cleaves proteins, imported into the mitochondrion, to their mature size. While most mitochondrial precursor proteins are processed to the mature form in one step by mitochondrial processing peptidase (MPP), the sequential cleavage by MIP of an octapeptide after initial processing by MPP is a required step for a subgroup of nuclear-encoded precursor proteins destined for the matrix or the inner membrane. In Leucoagaricus gongylophorus (Leaf-cutting ant fungus), this protein is Mitochondrial intermediate peptidase (OCT1).